The sequence spans 409 residues: Serine/threonine transporter SstT (409 aa).

9 helical membrane passes run 24–44 (LALGIVIGSVSPQLGLAAGLF), 48–68 (FVGALKAVAPVLVFILVAATI), 82–102 (IIVLYLIGTFSAALTAVIAGM), 142–162 (AIANANYIGILAWALVLGAAL), 194–214 (LGIFGLVSSTIAETGFGALAG), 218–238 (LLAVLLGCMAFIALAVNPAIV), 292–312 (IPLGATVNMGGAAITITVLAM), 319–339 (GIQVDFATALLLSLVATVSAC), and 365–385 (VAMQVVAVGFIIGVIQDSAET).

It belongs to the dicarboxylate/amino acid:cation symporter (DAACS) (TC 2.A.23) family.

It localises to the cell inner membrane. It catalyses the reaction L-serine(in) + Na(+)(in) = L-serine(out) + Na(+)(out). The enzyme catalyses L-threonine(in) + Na(+)(in) = L-threonine(out) + Na(+)(out). In terms of biological role, involved in the import of serine and threonine into the cell, with the concomitant import of sodium (symport system). The polypeptide is Serine/threonine transporter SstT (Neisseria gonorrhoeae (strain NCCP11945)).